Reading from the N-terminus, the 279-residue chain is Putative E3 ubiquitin-protein ligase C36B7.05c (279 aa).

Residues 27–122 form an FYVE-type zinc finger; it reads DDESAQCNNC…VCVNCRQQLS (96 aa). Positions 33, 36, 49, 52, 57, 60, 114, and 117 each coordinate Zn(2+). Position 200 is a phosphoserine (serine 200). Residues 230–273 form an RING-type; atypical zinc finger; sequence CIICFEEFAAGDRVARIEYCLCIFHLKCYRDWLSTGAAGCPVHA.

The protein localises to the cytoplasm. The protein resides in the nucleus. It localises to the endosome membrane. It is found in the vacuole membrane. It carries out the reaction S-ubiquitinyl-[E2 ubiquitin-conjugating enzyme]-L-cysteine + [acceptor protein]-L-lysine = [E2 ubiquitin-conjugating enzyme]-L-cysteine + N(6)-ubiquitinyl-[acceptor protein]-L-lysine.. It participates in protein modification; protein ubiquitination. Its function is as follows. Functions as an E3 ubiquitin-protein ligase. Binds phospholipid vesicles containing phosphatidylinositol 3-phosphate. In Schizosaccharomyces pombe (strain 972 / ATCC 24843) (Fission yeast), this protein is Putative E3 ubiquitin-protein ligase C36B7.05c.